Here is an 804-residue protein sequence, read N- to C-terminus: Leucine--tRNA ligase (804 aa).

Positions 40–51 match the 'HIGH' region motif; the sequence is PYPSGQGLHVGH. The 'KMSKS' region signature appears at 576–580; the sequence is KMSKS. Lysine 579 is an ATP binding site.

It belongs to the class-I aminoacyl-tRNA synthetase family.

It is found in the cytoplasm. The enzyme catalyses tRNA(Leu) + L-leucine + ATP = L-leucyl-tRNA(Leu) + AMP + diphosphate. The sequence is that of Leucine--tRNA ligase from Oceanobacillus iheyensis (strain DSM 14371 / CIP 107618 / JCM 11309 / KCTC 3954 / HTE831).